The primary structure comprises 464 residues: Mannose-1-phosphate guanylyltransferase (464 aa).

This sequence belongs to the mannose-6-phosphate isomerase type 2 family.

The catalysed reaction is alpha-D-mannose 1-phosphate + GTP + H(+) = GDP-alpha-D-mannose + diphosphate. It participates in nucleotide-sugar biosynthesis; GDP-alpha-D-mannose biosynthesis; GDP-alpha-D-mannose from alpha-D-mannose 1-phosphate (GTP route): step 1/1. The protein operates within bacterial outer membrane biogenesis; LPS O-antigen biosynthesis. Functionally, involved in GDP-mannose biosynthesis which serves as the activated sugar nucleotide precursor for mannose residues in cell surface polysaccharides. This enzyme participates in synthesis of the LPS O7 antigen. The sequence is that of Mannose-1-phosphate guanylyltransferase (manC) from Escherichia coli.